The following is a 207-amino-acid chain: MKRRPTSKAWLQEHVNDEFVKRAQRDGYRARAAYKLLEIDDKDQLIKPGMTIVDLGSAPGSWSQVAVQRLAGQGRVIALDILEMPPIPGVEFIQGDFREEEILLVLEKSLNGKPVDLVIADMAPNISGISDVDQARAAYLVELALEFSREWLKPGGNFLVKVFVGSGFDEIVMAMRDSFEKVVTRKPKASRDRSSEVYLLGLKRRNA.

5 residues coordinate S-adenosyl-L-methionine: Gly-60, Trp-62, Asp-80, Asp-96, and Asp-121. The Proton acceptor role is filled by Lys-161.

The protein belongs to the class I-like SAM-binding methyltransferase superfamily. RNA methyltransferase RlmE family.

The protein localises to the cytoplasm. The enzyme catalyses uridine(2552) in 23S rRNA + S-adenosyl-L-methionine = 2'-O-methyluridine(2552) in 23S rRNA + S-adenosyl-L-homocysteine + H(+). In terms of biological role, specifically methylates the uridine in position 2552 of 23S rRNA at the 2'-O position of the ribose in the fully assembled 50S ribosomal subunit. The polypeptide is Ribosomal RNA large subunit methyltransferase E (Methylobacillus flagellatus (strain ATCC 51484 / DSM 6875 / VKM B-1610 / KT)).